The chain runs to 76 residues: Kappa-actitoxin-Avd4n (76 aa).

Positions 1 to 19 (MNKAFFLCLVVLCAAVVFA) are cleaved as a signal peptide. Residues 20–31 (AEDLQKGKHAPF) constitute a propeptide that is removed on maturation. 2 disulfides stabilise this stretch: cysteine 37–cysteine 72 and cysteine 39–cysteine 65.

It belongs to the sea anemone type 3 (BDS) potassium channel toxin family. Lacks the conventional Cys residue at position 55. Thus, only 2 disulfide are possible present. In terms of tissue distribution, experimental results show no expression in the ectodermal tissue from the distal and proximal tentacles, body wall, and oral disk. Since paralogs are expressed in this tissue, an expression of this toxin in this tissue is probable. The negative results could be explained by the very low abundance of EST sequences.

The protein resides in the secreted. Its subcellular location is the nematocyst. In terms of biological role, blocks Kv3 voltage-gated potassium channels. Reduces blood pressure. This is Kappa-actitoxin-Avd4n from Anemonia viridis (Snakelocks anemone).